The sequence spans 84 residues: MKVVLLVCLVWMMAMMELVSCECWSQADCSGGHCCAGSSFSKNCRPYGGDGEQCEPRNKYEVYSRGCPCEENLMCSVINRCQSA.

The N-terminal stretch at 1–21 (MKVVLLVCLVWMMAMMELVSC) is a signal peptide. 5 disulfides stabilise this stretch: cysteine 23-cysteine 35, cysteine 29-cysteine 44, cysteine 34-cysteine 67, cysteine 54-cysteine 75, and cysteine 69-cysteine 81.

This sequence belongs to the AVIT (prokineticin) family. As to expression, expressed by the venom gland.

It is found in the secreted. The protein is U8-theraphotoxin-Hhn1e of Cyriopagopus hainanus (Chinese bird spider).